A 318-amino-acid chain; its full sequence is Mitochondrial thiamine pyrophosphate carrier 1 (318 aa).

6 consecutive transmembrane segments (helical) span residues G12–S28, L91–T107, S125–Y141, G181–F197, A221–L237, and G284–W301. Solcar repeat units follow at residues G12–A110, P120–V206, and P214–Y309.

This sequence belongs to the mitochondrial carrier (TC 2.A.29) family.

It is found in the mitochondrion inner membrane. Functionally, mitochondrial transporter that mediates uptake of thiamine pyrophosphate (ThPP) into mitochondria. This is Mitochondrial thiamine pyrophosphate carrier 1 (tpc1) from Aspergillus oryzae (strain ATCC 42149 / RIB 40) (Yellow koji mold).